Here is a 228-residue protein sequence, read N- to C-terminus: Phosphatidylserine decarboxylase proenzyme (228 aa).

Residue serine 197 is the Schiff-base intermediate with substrate; via pyruvic acid of the active site. Serine 197 carries the pyruvic acid (Ser); by autocatalysis modification.

It belongs to the phosphatidylserine decarboxylase family. PSD-A subfamily. As to quaternary structure, heterodimer of a large membrane-associated beta subunit and a small pyruvoyl-containing alpha subunit. Pyruvate serves as cofactor. In terms of processing, is synthesized initially as an inactive proenzyme. Formation of the active enzyme involves a self-maturation process in which the active site pyruvoyl group is generated from an internal serine residue via an autocatalytic post-translational modification. Two non-identical subunits are generated from the proenzyme in this reaction, and the pyruvate is formed at the N-terminus of the alpha chain, which is derived from the carboxyl end of the proenzyme. The post-translation cleavage follows an unusual pathway, termed non-hydrolytic serinolysis, in which the side chain hydroxyl group of the serine supplies its oxygen atom to form the C-terminus of the beta chain, while the remainder of the serine residue undergoes an oxidative deamination to produce ammonia and the pyruvoyl prosthetic group on the alpha chain.

It is found in the cell membrane. It carries out the reaction a 1,2-diacyl-sn-glycero-3-phospho-L-serine + H(+) = a 1,2-diacyl-sn-glycero-3-phosphoethanolamine + CO2. It functions in the pathway phospholipid metabolism; phosphatidylethanolamine biosynthesis; phosphatidylethanolamine from CDP-diacylglycerol: step 2/2. Functionally, catalyzes the formation of phosphatidylethanolamine (PtdEtn) from phosphatidylserine (PtdSer). This Phocaeicola vulgatus (strain ATCC 8482 / DSM 1447 / JCM 5826 / CCUG 4940 / NBRC 14291 / NCTC 11154) (Bacteroides vulgatus) protein is Phosphatidylserine decarboxylase proenzyme.